The primary structure comprises 163 residues: Early nodulin-like protein 20 (163 aa).

An N-terminal signal peptide occupies residues 1 to 25; that stretch reads MMGKYLWALVYVTVMILIIVVEVES. A Phytocyanin domain is found at 26-126; it reads SLHRVGGGRY…GMKLAITVLP (101 aa). 5 N-linked (GlcNAc...) asparagine glycosylation sites follow: asparagine 42, asparagine 63, asparagine 73, asparagine 88, and asparagine 135. Residues cysteine 80 and cysteine 114 are joined by a disulfide bond. Serine 138 is lipidated: GPI-anchor amidated serine. The propeptide at 139–163 is removed in mature form; the sequence is TTTPLIPPNAITAAILIFAFKALLL.

Belongs to the early nodulin-like (ENODL) family.

The protein resides in the cell membrane. In terms of biological role, may act as a carbohydrate transporter. This chain is Early nodulin-like protein 20, found in Arabidopsis thaliana (Mouse-ear cress).